The chain runs to 413 residues: Tryptophan synthase beta chain 2 (413 aa).

At K107 the chain carries N6-(pyridoxal phosphate)lysine.

The protein belongs to the TrpB family. Tetramer of two alpha and two beta chains. Pyridoxal 5'-phosphate is required as a cofactor.

The enzyme catalyses (1S,2R)-1-C-(indol-3-yl)glycerol 3-phosphate + L-serine = D-glyceraldehyde 3-phosphate + L-tryptophan + H2O. It participates in amino-acid biosynthesis; L-tryptophan biosynthesis; L-tryptophan from chorismate: step 5/5. The beta subunit is responsible for the synthesis of L-tryptophan from indole and L-serine. This is Tryptophan synthase beta chain 2 (trpB2) from Nostoc sp. (strain PCC 7120 / SAG 25.82 / UTEX 2576).